Here is a 171-residue protein sequence, read N- to C-terminus: Pro-corazonin (171 aa).

Positions 1 to 20 (MLHTRTIALLLVGLVVLVNA) are cleaved as a signal peptide. Glutamine 21 is modified (pyrrolidone carboxylic acid). At asparagine 31 the chain carries Asparagine amide. The propeptide occupies 82–171 (FLRNPCDLRV…GFSDHRQKIA (90 aa)).

The protein belongs to the corazonin family.

The protein resides in the secreted. Functionally, cardioactive peptide. Corazonin is probably involved in the physiological regulation of the heart beat. The polypeptide is Pro-corazonin (Anopheles gambiae (African malaria mosquito)).